The sequence spans 313 residues: MSKRTLRIATRSSALALWQAEFIKAELERLHDNVDVELIKIKTQGDKILDVPLAKIGGKGLFVKELEEAMLDGRADLAVHSMKDVPMEFPEGLGLVAICEREDPTDAFVSNQYEHIDQLPEGAVVGTASLRREAQLRANRPDLQIKVLRGNVNTRLAKLDAGEYDAIVLASSGLKRLGFHDRIRYCLPDTFSLPAVGQGALGIECRVGDTELLELIDPLNHTDTWDRVSAERALNRRLEGGCQVPIAAYALLEDDNTLWLRGLVGAVDGTQIFRVEGRAPRAEGERLGRELAEQLLSMGADKVLAEIYGHTPR.

Cys-242 carries the post-translational modification S-(dipyrrolylmethanemethyl)cysteine.

This sequence belongs to the HMBS family. As to quaternary structure, monomer. Dipyrromethane is required as a cofactor.

It carries out the reaction 4 porphobilinogen + H2O = hydroxymethylbilane + 4 NH4(+). It participates in porphyrin-containing compound metabolism; protoporphyrin-IX biosynthesis; coproporphyrinogen-III from 5-aminolevulinate: step 2/4. Tetrapolymerization of the monopyrrole PBG into the hydroxymethylbilane pre-uroporphyrinogen in several discrete steps. The protein is Porphobilinogen deaminase of Marinobacter nauticus (strain ATCC 700491 / DSM 11845 / VT8) (Marinobacter aquaeolei).